Consider the following 513-residue polypeptide: GMP synthase [glutamine-hydrolyzing] (513 aa).

In terms of domain architecture, Glutamine amidotransferase type-1 spans 9–198; it reads LILVLDFGSQ…VRRVCECKGQ (190 aa). Residue Cys86 is the Nucleophile of the active site. Residues His172 and Glu174 contribute to the active site. One can recognise a GMPS ATP-PPase domain in the interval 199 to 388; sequence WTMENFIEIE…LGIPEHLVWR (190 aa). 226 to 232 provides a ligand contact to ATP; that stretch reads SGGVDSS.

In terms of assembly, homodimer.

The enzyme catalyses XMP + L-glutamine + ATP + H2O = GMP + L-glutamate + AMP + diphosphate + 2 H(+). The protein operates within purine metabolism; GMP biosynthesis; GMP from XMP (L-Gln route): step 1/1. Functionally, catalyzes the synthesis of GMP from XMP. This chain is GMP synthase [glutamine-hydrolyzing], found in Staphylococcus aureus (strain MSSA476).